Reading from the N-terminus, the 555-residue chain is Zinc transporter ZIP5 (555 aa).

At 1–242 (MGGQTVWMTL…HSQASKTSEG (242 aa)) the chain is on the extracellular side. The disordered stretch occupies residues 108–148 (KHPSQSISHSHSHEDHHPSQGTTNSPPLRESLDAKSALSGS). A helical membrane pass occupies residues 243 to 263 (FLIALGWASLALLVISLPSLV). Residues 264-314 (ALGMAPLLQPSVLQVFLCPMAGMAVGTLCGDALLHLMPHAIFSQHTDHQNA) are Cytoplasmic-facing. Residues 315–335 (VFKGLSVLGGLYLLFIFESLL) traverse the membrane as a helical segment. Over 336 to 408 (GLKQHFKNLK…DGIHNLTDGL (73 aa)) the chain is Extracellular. Over residues 363-374 (TSSANQNESSGH) the composition is skewed to polar residues. A disordered region spans residues 363–383 (TSSANQNESSGHGHSHGQAEP). The helical transmembrane segment at 409-429 (AIGVAFSQSLTGGFSTAIAVF) threads the bilayer. Residues 430–452 (CHELPHELGDLAVLLSAGWPVRR) are Cytoplasmic-facing. Residues 453 to 473 (LLVFSGLSALLGFVGVLAGSA) form a helical membrane-spanning segment. The Extracellular portion of the chain corresponds to 474–482 (LGNHWASHS). The chain crosses the membrane as a helical span at residues 483–503 (PWILTLTAGVFLYVALADMMP). Over 504–518 (EMLHGACGSVSPLKR) the chain is Cytoplasmic. The chain crosses the membrane as a helical span at residues 519-539 (FLLQALGLLTGGAIMLCIALF). The Extracellular segment spans residues 540 to 555 (EDHIAVSLGENSLGEN).

It belongs to the ZIP transporter (TC 2.A.5) family.

Its subcellular location is the basolateral cell membrane. The catalysed reaction is Zn(2+)(in) = Zn(2+)(out). Uniporter that transports zinc(2+) into polarized cells of enterocytes, pancreatic acinar and endoderm cells across the basolateral membrane and participates, notably, in zinc excretion from the intestine by the uptake of zinc from the blood into the intestine. The transport mechanism is temperature- and concentration-dependent and saturable. Mediates zinc homeostasis that is essential for venous angiogenesis. In Danio rerio (Zebrafish), this protein is Zinc transporter ZIP5 (slc39a5).